Reading from the N-terminus, the 255-residue chain is Large ribosomal subunit protein uL2 (255 aa).

Positions 201–229 (YAHPHGGGSHQQGGTPVKKNAPPGQKVGF) are disordered.

Belongs to the universal ribosomal protein uL2 family. Part of the 50S ribosomal subunit. Forms a bridge to the 30S subunit in the 70S ribosome.

Functionally, one of the primary rRNA binding proteins. Required for association of the 30S and 50S subunits to form the 70S ribosome, for tRNA binding and peptide bond formation. It has been suggested to have peptidyltransferase activity; this is somewhat controversial. Makes several contacts with the 16S rRNA in the 70S ribosome. The protein is Large ribosomal subunit protein uL2 of Caldivirga maquilingensis (strain ATCC 700844 / DSM 13496 / JCM 10307 / IC-167).